The chain runs to 174 residues: Peptide methionine sulfoxide reductase MsrA (174 aa).

Residue C10 is part of the active site.

It belongs to the MsrA Met sulfoxide reductase family.

It catalyses the reaction L-methionyl-[protein] + [thioredoxin]-disulfide + H2O = L-methionyl-(S)-S-oxide-[protein] + [thioredoxin]-dithiol. It carries out the reaction [thioredoxin]-disulfide + L-methionine + H2O = L-methionine (S)-S-oxide + [thioredoxin]-dithiol. Its function is as follows. Has an important function as a repair enzyme for proteins that have been inactivated by oxidation. Catalyzes the reversible oxidation-reduction of methionine sulfoxide in proteins to methionine. The sequence is that of Peptide methionine sulfoxide reductase MsrA from Pseudarthrobacter chlorophenolicus (strain ATCC 700700 / DSM 12829 / CIP 107037 / JCM 12360 / KCTC 9906 / NCIMB 13794 / A6) (Arthrobacter chlorophenolicus).